Reading from the N-terminus, the 451-residue chain is Vitamin D3 receptor (451 aa).

The segment at residues Pro44–Met112 is a DNA-binding region (nuclear receptor). 8 residues coordinate Zn(2+): Cys47, Cys50, Cys64, Cys67, Cys83, Cys89, Cys99, and Cys102. NR C4-type zinc fingers lie at residues Cys47–Cys67 and Cys83–Cys107. Hinge stretches follow at residues Met113–Glu149 and Asp120–Glu149. An NR LBD domain is found at Glu150–Gly447. Ser261 is a calcitriol binding site. The interval Lys270–Lys288 is interaction with coactivator LXXLL motif. Residues Arg298, Ser302, His329, and His421 each contribute to the calcitriol site. A 9aaTAD motif is present at residues Pro440 to Asn448.

It belongs to the nuclear hormone receptor family. NR1 subfamily. As to quaternary structure, homodimer in the absence of bound vitamin D3. Heterodimer with RXRA after vitamin D3 binding. In terms of tissue distribution, expressed in kidney and intestine.

It localises to the nucleus. Its subcellular location is the cytoplasm. In terms of biological role, nuclear receptor for calcitriol, the active form of vitamin D3 which mediates the action of this vitamin on cells. Enters the nucleus upon vitamin D3 binding where it forms heterodimers with the retinoid X receptor/RXR. The VDR-RXR heterodimers bind to specific response elements on DNA and activate the transcription of vitamin D3-responsive target genes. Plays a central role in calcium homeostasis. Also functions as a receptor for the secondary bile acid lithocholic acid (LCA) and its metabolites. The sequence is that of Vitamin D3 receptor (VDR) from Gallus gallus (Chicken).